The chain runs to 423 residues: F-box/LRR-repeat protein 2 (423 aa).

An F-box domain is found at 9-55 (GLINKKLPKELLLRIFSFLDIVTLCRCAQISKAWNILALDGSNWQRI). LRR repeat units lie at residues 61-87 (QTDVEGRVVENISKRCGGFLRKLSLRG), 88-113 (CIGVGDSSLKTFAQNCRNIEHLNLNG), 114-139 (CTKITDSTCYSLSRFCSKLKHLDLTS), 140-165 (CVSITNSSLKGISEGCRNLEYLNLSW), 166-191 (CDQITKDGIEALVRGCRGLKALLLRG), 192-217 (CTQLEDEALKHIQNYCHELVSLNLQS), 218-243 (CSRITDEGVVQICRGCHRLQALCLSG), 244-269 (CSNLTDASLTALGLNCPRLQILEAAR), 270-295 (CSHLTDAGFTLLARNCHELEKMDLEE), 296-321 (CILITDSTLIQLSIHCPKLQALSLSH), 322-350 (CELITDDGILHLSNSTCGHERLRVLELDN), 351-375 (CLLITDVALEHLENCRGLERLELYD), and 376-401 (CQQVTRAGIKRMRAQLPHVKVHAYFA). Positions 80-90 (LRKLSLRGCIG) are interaction with Calmodulin. Lys-201 participates in a covalent cross-link: Glycyl lysine isopeptide (Lys-Gly) (interchain with G-Cter in ubiquitin). A Phosphothreonine modification is found at Thr-404. Cys-420 carries S-geranylgeranyl cysteine lipidation. The CAAX motif motif lies at 420-423 (CVIL).

Part of the SCF (SKP1-CUL1-F-box) E3 ubiquitin-protein ligase complex SCF(FBXL2) composed of CUL1, SKP1, RBX1 and FBXL2. Interacts with calmodulin; may antagonize substrate ubiquitination by SCF(FBXL2). May interact with PIK3R1. Interacts with PTPN13. As to quaternary structure, (Microbial infection) Interacts with hepatitis C virus non-structural protein 5A (NS5A) and less efficiently, with hepatitis C virus non-structural protein 5B (NS5B); a reaction crucial for hepatitis C virus RNA replication. Post-translationally, phosphorylated by GSK-beta (GSK3B), promoting recognition by FBXO3, leading to its ubiquitination by the SCF(FBXO3) complex. In terms of processing, ubiquitinated at Lys-201 by the SCF(FBXO3) complex in response to lipopolysaccharide (LPS), leading to its degradation by the proteasome. As to expression, expressed in brain, heart, kidney, liver, lung, pancreas and placenta.

It is found in the membrane. It participates in protein modification; protein ubiquitination. Calcium-activated substrate recognition component of the SCF (SKP1-cullin-F-box protein) E3 ubiquitin-protein ligase complex, SCF(FBXL2), which mediates the ubiquitination and subsequent proteasomal degradation of target proteins. Unlike many F-box proteins, FBXL2 does not seem to target phosphodegron within its substrates but rather calmodulin-binding motifs and is thereby antagonized by calmodulin. This is the case for the cyclins CCND2 and CCND3 which polyubiquitination and subsequent degradation are inhibited by calmodulin. Through CCND2 and CCND3 degradation induces cell-cycle arrest in G(0). SCF(FBXL2) also mediates PIK3R2 ubiquitination and proteasomal degradation thereby regulating phosphatidylinositol 3-kinase signaling and autophagy. PCYT1A monoubiquitination by SCF(FBXL2) and subsequent degradation regulates synthesis of phosphatidylcholine, which is utilized for formation of membranes and of pulmonary surfactant. The SCF(FBXL2) complex acts as a regulator of inflammation by mediating ubiquitination and degradation of TRAF proteins (TRAF1, TRAF2, TRAF3, TRAF4, TRAF5 and TRAF6). The SCF(FBXL2) complex acts as a negative regulator of the NLRP3 inflammasome by mediating ubiquitination and degradation of NLRP3. The protein is F-box/LRR-repeat protein 2 of Homo sapiens (Human).